A 281-amino-acid chain; its full sequence is uncharacterized protein (281 aa).

Transmembrane regions (helical) follow at residues 23-45 (LLLSYIINLISSIIILIIGFFAA), 65-87 (IANFLAALVRYIIITFALIASLG), and 94-116 (TSVIAILGAAGMAIGLALQGSLS).

It belongs to the MscS (TC 1.A.23) family.

It localises to the cell membrane. This is an uncharacterized protein from Buchnera aphidicola subsp. Baizongia pistaciae (strain Bp).